The primary structure comprises 102 residues: COX assembly mitochondrial protein 2 homolog (102 aa).

The CHCH domain occupies 11 to 55 (TKECNMLIEFLQRCHSEKPIGKMIGKCSYWDEAVWQCTKKERIWR). 2 consecutive short sequence motifs (cx9C motif) follow at residues 14-24 (CNMLIEFLQRC) and 37-47 (CSYWDEAVWQC). Intrachain disulfides connect Cys14–Cys47 and Cys24–Cys37.

It belongs to the CMC family.

The protein localises to the mitochondrion. In terms of biological role, may be involved in cytochrome c oxidase biogenesis. This chain is COX assembly mitochondrial protein 2 homolog, found in Caenorhabditis elegans.